A 185-amino-acid chain; its full sequence is Ribonuclease M5 (185 aa).

Positions 4 to 87 constitute a Toprim domain; it reads KEIIVVEGKD…AFLPKEEALA (84 aa). Mg(2+)-binding residues include Glu10, Asp56, and Asp58.

This sequence belongs to the ribonuclease M5 family. Mg(2+) is required as a cofactor.

The protein resides in the cytoplasm. The catalysed reaction is Endonucleolytic cleavage of RNA, removing 21 and 42 nucleotides, respectively, from the 5'- and 3'-termini of a 5S-rRNA precursor.. Required for correct processing of both the 5' and 3' ends of 5S rRNA precursor. Cleaves both sides of a double-stranded region yielding mature 5S rRNA in one step. The chain is Ribonuclease M5 from Bacillus anthracis.